A 453-amino-acid chain; its full sequence is Exodeoxyribonuclease 7 large subunit (453 aa).

This sequence belongs to the XseA family. As to quaternary structure, heterooligomer composed of large and small subunits.

It localises to the cytoplasm. The enzyme catalyses Exonucleolytic cleavage in either 5'- to 3'- or 3'- to 5'-direction to yield nucleoside 5'-phosphates.. Bidirectionally degrades single-stranded DNA into large acid-insoluble oligonucleotides, which are then degraded further into small acid-soluble oligonucleotides. In Rickettsia typhi (strain ATCC VR-144 / Wilmington), this protein is Exodeoxyribonuclease 7 large subunit.